The sequence spans 220 residues: Thiamine-phosphate synthase (220 aa).

4-amino-2-methyl-5-(diphosphooxymethyl)pyrimidine is bound by residues 39 to 43 (QLRDK) and Asn-80. Mg(2+) is bound by residues Asp-81 and Asp-100. Ser-119 is a binding site for 4-amino-2-methyl-5-(diphosphooxymethyl)pyrimidine. Position 145-147 (145-147 (TPT)) interacts with 2-[(2R,5Z)-2-carboxy-4-methylthiazol-5(2H)-ylidene]ethyl phosphate. Lys-148 provides a ligand contact to 4-amino-2-methyl-5-(diphosphooxymethyl)pyrimidine. 2-[(2R,5Z)-2-carboxy-4-methylthiazol-5(2H)-ylidene]ethyl phosphate is bound at residue Gly-176.

It belongs to the thiamine-phosphate synthase family. Mg(2+) is required as a cofactor.

The enzyme catalyses 2-[(2R,5Z)-2-carboxy-4-methylthiazol-5(2H)-ylidene]ethyl phosphate + 4-amino-2-methyl-5-(diphosphooxymethyl)pyrimidine + 2 H(+) = thiamine phosphate + CO2 + diphosphate. The catalysed reaction is 2-(2-carboxy-4-methylthiazol-5-yl)ethyl phosphate + 4-amino-2-methyl-5-(diphosphooxymethyl)pyrimidine + 2 H(+) = thiamine phosphate + CO2 + diphosphate. It carries out the reaction 4-methyl-5-(2-phosphooxyethyl)-thiazole + 4-amino-2-methyl-5-(diphosphooxymethyl)pyrimidine + H(+) = thiamine phosphate + diphosphate. It functions in the pathway cofactor biosynthesis; thiamine diphosphate biosynthesis; thiamine phosphate from 4-amino-2-methyl-5-diphosphomethylpyrimidine and 4-methyl-5-(2-phosphoethyl)-thiazole: step 1/1. Its function is as follows. Condenses 4-methyl-5-(beta-hydroxyethyl)thiazole monophosphate (THZ-P) and 2-methyl-4-amino-5-hydroxymethyl pyrimidine pyrophosphate (HMP-PP) to form thiamine monophosphate (TMP). The sequence is that of Thiamine-phosphate synthase from Mycobacterium ulcerans (strain Agy99).